The following is a 382-amino-acid chain: Succinate--CoA ligase [ADP-forming] subunit beta 1 (382 aa).

In terms of domain architecture, ATP-grasp spans 9–235; sequence KQIFAKHGIR…ATEEDPLERE (227 aa). ATP contacts are provided by residues Lys45, 52–54, Glu91, Leu94, and Glu99; that span reads GRG. Positions 191 and 204 each coordinate Mg(2+). Substrate is bound at residue Asn255.

It belongs to the succinate/malate CoA ligase beta subunit family. As to quaternary structure, heterotetramer of two alpha and two beta subunits. Mg(2+) serves as cofactor.

The enzyme catalyses succinate + ATP + CoA = succinyl-CoA + ADP + phosphate. It carries out the reaction GTP + succinate + CoA = succinyl-CoA + GDP + phosphate. The protein operates within carbohydrate metabolism; tricarboxylic acid cycle; succinate from succinyl-CoA (ligase route): step 1/1. Succinyl-CoA synthetase functions in the citric acid cycle (TCA), coupling the hydrolysis of succinyl-CoA to the synthesis of either ATP or GTP and thus represents the only step of substrate-level phosphorylation in the TCA. The beta subunit provides nucleotide specificity of the enzyme and binds the substrate succinate, while the binding sites for coenzyme A and phosphate are found in the alpha subunit. In Archaeoglobus fulgidus (strain ATCC 49558 / DSM 4304 / JCM 9628 / NBRC 100126 / VC-16), this protein is Succinate--CoA ligase [ADP-forming] subunit beta 1.